The primary structure comprises 408 residues: Peptidase T (408 aa).

A Zn(2+)-binding site is contributed by histidine 78. Residue aspartate 80 is part of the active site. Aspartate 140 contributes to the Zn(2+) binding site. The active-site Proton acceptor is glutamate 173. The Zn(2+) site is built by glutamate 174, aspartate 196, and histidine 379.

The protein belongs to the peptidase M20B family. Requires Zn(2+) as cofactor.

The protein localises to the cytoplasm. It carries out the reaction Release of the N-terminal residue from a tripeptide.. Its function is as follows. Cleaves the N-terminal amino acid of tripeptides. The sequence is that of Peptidase T from Escherichia coli (strain K12 / MC4100 / BW2952).